The following is a 63-amino-acid chain: Conotoxin Cal6.28 (63 aa).

The N-terminal stretch at 1–22 (MKLTCVLIVAVLILTACQVIAA) is a signal peptide. 3 disulfides stabilise this stretch: cysteine 34-cysteine 45, cysteine 37-cysteine 51, and cysteine 44-cysteine 58.

This sequence belongs to the conotoxin O1 superfamily. Expressed by the venom duct.

It localises to the secreted. Its function is as follows. Probable neurotoxin. The sequence is that of Conotoxin Cal6.28 from Californiconus californicus (California cone).